We begin with the raw amino-acid sequence, 92 residues long: Small ribosomal subunit protein uS19 (92 aa).

Residues 72 to 92 (GEFSPTRTYTGHGSDKKSKRG) form a disordered region.

Belongs to the universal ribosomal protein uS19 family.

Functionally, protein S19 forms a complex with S13 that binds strongly to the 16S ribosomal RNA. This chain is Small ribosomal subunit protein uS19, found in Gluconobacter oxydans (strain 621H) (Gluconobacter suboxydans).